Reading from the N-terminus, the 213-residue chain is Achelase-1 (213 aa).

The Peptidase S1 domain maps to 1-213; that stretch reads IVGGSVTTIG…RYTSWIQSNA (213 aa). C26 and C42 are joined by a disulfide. Active-site charge relay system residues include H41 and D86. An intrachain disulfide couples C155 to C172. The active-site Charge relay system is S188.

The protein belongs to the peptidase S1 family. Hemolymph and saliva of the larval form (caterpillar).

It localises to the secreted. It is found in the extracellular space. With respect to regulation, sensitive to serine proteinase inhibitors and thiol proteinase inhibitors. In terms of biological role, fibrinolytic activity; shows preferential cleavage of Arg-Gly bonds in all three fibrinogen chains. Contact with the caterpillars causes severe bleeding, due the anticoagulant effect of the protein. The polypeptide is Achelase-1 (Lonomia achelous (Giant silkworm moth)).